A 23-amino-acid chain; its full sequence is Toxin Acra2 (23 aa).

Positions Lys-2 to Cys-23 constitute an LCN-type CS-alpha/beta domain.

In terms of processing, contains 4 disulfide bonds. Expressed by the venom gland.

It localises to the secreted. In terms of biological role, excitatory insect toxins induce a spastic paralysis. They bind voltage-independently at site-4 of sodium channels (Nav) and shift the voltage of activation toward more negative potentials thereby affecting sodium channel activation and promoting spontaneous and repetitive firing. Is lethal to mice. Is about 1% of the total protein in the venom. This Androctonus crassicauda (Arabian fat-tailed scorpion) protein is Toxin Acra2.